Here is a 517-residue protein sequence, read N- to C-terminus: Protein ERGIC-53 (517 aa).

The signal sequence occupies residues 1-30; that stretch reads MAVSRRRGPQAGAQSFFCALLLSFSQFVGS. The Lumenal portion of the chain corresponds to 31–484; the sequence is DGMGGDAAAP…DLPAFPSCLS (454 aa). In terms of domain architecture, L-type lectin-like spans 52–275; that stretch reads RRFEYKYSFK…DVLSFLTFQL (224 aa). Residues S96 and D129 each contribute to the a carbohydrate site. Ca(2+)-binding residues include D160, F162, D163, N164, D165, N169, and N170. N164 contacts a carbohydrate. Position 186 (H186) interacts with a carbohydrate. Position 189 (D189) interacts with Ca(2+). An intrachain disulfide couples C198 to C238. A carbohydrate is bound at residue 259–261; that stretch reads GGL. 2 disordered regions span residues 276–297 and 377–396; these read TEPG…KEKY and EISR…SQQE. The span at 278 to 297 shows a compositional bias: basic and acidic residues; sequence PGKEPPTPEKDISEKEKEKY. S433 carries the phosphoserine modification. Residues 485 to 505 form a helical membrane-spanning segment; the sequence is TVHFVIFIVVQTVLFIGYIMY. Residues 506-517 lie on the Cytoplasmic side of the membrane; sequence RTQQEAAAKKFF. The segment at 506–517 is mediates interaction with RAB3GAP1, RAB3GAP2 and UBXN6; that stretch reads RTQQEAAAKKFF. Positions 516-517 match the ER export motif motif; sequence FF.

Exists both as a covalent disulfide-linked homohexamer, and a complex of three disulfide-linked dimers non-covalently kept together. Interacts with MCFD2. May interact with TMEM115. Interacts with RAB3GAP1 and RAB3GAP2. Interacts with UBXN6. Interacts with SERPINA1/alpha1-antitrypsin. Interacts with BET1.

It is found in the endoplasmic reticulum-Golgi intermediate compartment membrane. Its subcellular location is the golgi apparatus membrane. The protein resides in the endoplasmic reticulum membrane. In terms of biological role, mannose-specific lectin. May recognize sugar residues of glycoproteins, glycolipids, or glycosylphosphatidyl inositol anchors and may be involved in the sorting or recycling of proteins, lipids, or both. The LMAN1-MCFD2 complex forms a specific cargo receptor for the ER-to-Golgi transport of selected proteins. The sequence is that of Protein ERGIC-53 (Lman1) from Rattus norvegicus (Rat).